The following is a 529-amino-acid chain: Bifunctional purine biosynthesis protein PurH (529 aa).

An MGS-like domain is found at 1–148 (MNNARPIRRA…KNHKDTTIIV (148 aa)).

This sequence belongs to the PurH family.

The enzyme catalyses (6R)-10-formyltetrahydrofolate + 5-amino-1-(5-phospho-beta-D-ribosyl)imidazole-4-carboxamide = 5-formamido-1-(5-phospho-D-ribosyl)imidazole-4-carboxamide + (6S)-5,6,7,8-tetrahydrofolate. It catalyses the reaction IMP + H2O = 5-formamido-1-(5-phospho-D-ribosyl)imidazole-4-carboxamide. It functions in the pathway purine metabolism; IMP biosynthesis via de novo pathway; 5-formamido-1-(5-phospho-D-ribosyl)imidazole-4-carboxamide from 5-amino-1-(5-phospho-D-ribosyl)imidazole-4-carboxamide (10-formyl THF route): step 1/1. It participates in purine metabolism; IMP biosynthesis via de novo pathway; IMP from 5-formamido-1-(5-phospho-D-ribosyl)imidazole-4-carboxamide: step 1/1. The polypeptide is Bifunctional purine biosynthesis protein PurH (Shewanella pealeana (strain ATCC 700345 / ANG-SQ1)).